The chain runs to 34 residues: Kappa-theraphotoxin-Scg1a (34 aa).

3 disulfides stabilise this stretch: Cys-2–Cys-16, Cys-9–Cys-21, and Cys-15–Cys-28. The segment at 4–6 (YLF) is involved in active face.

The protein belongs to the neurotoxin 10 (Hwtx-1) family. 09 (HaTx) subfamily. Expressed by the venom gland.

It is found in the secreted. Reversibly inhibits potassium currents in oocytes expressing Kv2.1/KCNB1 channels (Kd=2.7 uM). Acts by shifting activation of the channel to more depolarized voltages. The toxin may bind to the S3b-S4 helices of the voltage sensor paddle. One, two, three or four toxin molecules may bind the Kv2.1/KCNB1 channel. It shows low to moderate affinity for lipid bilayers. It partitions into the bilayer membrane, where it stabilizes at the water/membrane interface. In Stromatopelma calceatum griseipes (Feather leg baboon tarantula), this protein is Kappa-theraphotoxin-Scg1a.